We begin with the raw amino-acid sequence, 184 residues long: mRNA transport regulator MTR2 (184 aa).

The disordered stretch occupies residues 111–135; it reads KMGQDATVPIQPNNTGNRNRPNDMN. Residues 120-129 show a composition bias toward polar residues; it reads IQPNNTGNRN. A Phosphothreonine modification is found at threonine 125.

As to quaternary structure, interacts with MEX67.

Its subcellular location is the nucleus. Its function is as follows. Affects mRNA transport from the nucleus to the cytoplasm. This is mRNA transport regulator MTR2 (MTR2) from Saccharomyces cerevisiae (strain ATCC 204508 / S288c) (Baker's yeast).